Here is a 529-residue protein sequence, read N- to C-terminus: Basal body-orientation factor 1 (529 aa).

The segment covering 1 to 13 (MPSKGKDKKKGKS) has biased composition (basic residues). Positions 1-22 (MPSKGKDKKKGKSRGKDTKKLI) are disordered. Coiled-coil stretches lie at residues 55 to 198 (DTSR…LKQE) and 271 to 361 (IKEK…EVER). Positions 510 to 529 (GKVVLPTIPKGPQESDTGTF) are disordered.

The protein belongs to the BBOF1 family. Interacts with MNS1 and ODF2.

Its subcellular location is the cytoplasm. The protein localises to the cytoskeleton. It localises to the cilium basal body. It is found in the flagellum axoneme. Plays an essential role in sperm motility and male fertility by stabilizing the sperm flagellar axonemal structure. May be required for the stability of ODF2 and MANS1 proteins. Dispensable for the assembly and function of motile cilia. The chain is Basal body-orientation factor 1 from Macaca fascicularis (Crab-eating macaque).